The chain runs to 493 residues: C2H2-type transcription factor ffmA (493 aa).

Residues 1–18 show a composition bias toward low complexity; it reads MPMPQYTMQPQYPVSQPH. Disordered stretches follow at residues 1 to 50, 68 to 140, and 164 to 202; these read MPMP…SRYP, TTVG…YPDG, and EPPR…KNTT. 2 stretches are compositionally biased toward polar residues: residues 69-79 and 192-202; these read TVGSLPPSTFL and NGVNGTAKNTT. The C2H2-type 1 zinc-finger motif lies at 212–234; it reads FPCPHCNKTYLHAKHLKRHLLRH. Residues 240–265 form a C2H2-type 2; degenerate zinc finger; the sequence is YMCVLCKDTFSRSDILKRHFQKCSIR. Composition is skewed to polar residues over residues 288-307 and 484-493; these read QAAA…TVPP and ASTTLGGDGK. 2 disordered regions span residues 288-316 and 468-493; these read QAAA…GATF and TTTA…GDGK.

It belongs to the krueppel C2H2-type zinc-finger protein family.

The protein localises to the nucleus. Functionally, transcription factor that acts in coordination with atrR to regulate the expression of the ABC-type multidrug transporter abcG1 and thus plays a role in azole susceptibility. Regulates the expression of genes involved in fermentation. Is able to promote expression from the yeast FLO11 promoter. In Aspergillus fumigatus (strain CBS 144.89 / FGSC A1163 / CEA10) (Neosartorya fumigata), this protein is C2H2-type transcription factor ffmA.